The following is a 454-amino-acid chain: Aspartate aminotransferase P2, mitochondrial (454 aa).

The N-terminal 49 residues, 1 to 49 (SSLLSIPSLSLQYNDKLKVGGNSLRFSKEQSNTFSNAKSSCRISMVAAV), are a transit peptide targeting the mitochondrion. Residues Gly86, Trp182, and Asn235 each contribute to the L-aspartate site. An N6-(pyridoxal phosphate)lysine modification is found at Lys299. Arg428 contributes to the L-aspartate binding site.

It belongs to the class-I pyridoxal-phosphate-dependent aminotransferase family. Homodimer. It depends on pyridoxal 5'-phosphate as a cofactor.

Its subcellular location is the mitochondrion matrix. The enzyme catalyses L-aspartate + 2-oxoglutarate = oxaloacetate + L-glutamate. Important for the metabolism of amino acids and Krebs-cycle related organic acids. In plants, it is involved in nitrogen metabolism and in aspects of carbon and energy metabolism. This is Aspartate aminotransferase P2, mitochondrial from Lupinus angustifolius (Narrow-leaved blue lupine).